The sequence spans 508 residues: Photosystem II CP47 reaction center protein (508 aa).

6 consecutive transmembrane segments (helical) span residues 21–36, 101–115, 140–156, 203–218, 237–252, and 457–472; these read AVHIMHTALVSGWAGS, IILSGLLFLAAIWHW, GIHLFLSGLLCFGFGAF, IAAGILGILAGLFHLS, VLSSSIAAVFFAAFIV, and CFALLFFFGHIWHGAR.

It belongs to the PsbB/PsbC family. PsbB subfamily. PSII is composed of 1 copy each of membrane proteins PsbA, PsbB, PsbC, PsbD, PsbE, PsbF, PsbH, PsbI, PsbJ, PsbK, PsbL, PsbM, PsbT, PsbX, PsbY, PsbZ, Psb30/Ycf12, at least 3 peripheral proteins of the oxygen-evolving complex and a large number of cofactors. It forms dimeric complexes. Binds multiple chlorophylls. PSII binds additional chlorophylls, carotenoids and specific lipids. is required as a cofactor.

The protein localises to the plastid. Its subcellular location is the chloroplast thylakoid membrane. Functionally, one of the components of the core complex of photosystem II (PSII). It binds chlorophyll and helps catalyze the primary light-induced photochemical processes of PSII. PSII is a light-driven water:plastoquinone oxidoreductase, using light energy to abstract electrons from H(2)O, generating O(2) and a proton gradient subsequently used for ATP formation. This is Photosystem II CP47 reaction center protein from Chara vulgaris (Common stonewort).